The sequence spans 485 residues: MDNVDKTMKSEISEEDPEQLFRVLEVIGQGSFGVVCTCINTVNNEVVAIKFLEMEGEENSSLKKEITILKNTVRCPYIVKYHGCYIKENNLMIVMEYCDGGSILDIMQMCSITLTEAQIAAILYQIVEGLVYLHSNKILHRDIKAGNVLVNKLGQAKLADFGVSAILVNTGFKQKTVVGSPYWMSPEVISPPKGSNGYDSKADIWSLGITAIEMAESKPPLFNLNPVKVIFVIPFRQAPTLEVPGNWSPEFNDFISVCLNKEADKRPSAVDLLNHPFIKKGKEHSQPTISEMVEQCIPTMKEYRRKKAEEEEAEEAEEGDDYDDVNGGGDERQHGSSVSSAGLQKGTLLKINTITQRATVMREDGTEDTSNNGGTFIYNNNNNNSSKTSSSGTVVFSKNGSIIKNDDDDDDDIEEGGFDSGSVVFKGSTLVEKFESMKLKYNKRRQQQESSDEEDEEDEDDEDDEEGGFDSGSVVYTKSPVNQDD.

One can recognise a Protein kinase domain in the interval phenylalanine 21–isoleucine 278. Residues isoleucine 27–valine 35 and lysine 50 contribute to the ATP site. Aspartate 142 (proton acceptor) is an active-site residue. Disordered regions lie at residues arginine 304 to leucine 343, valine 360 to valine 424, and serine 436 to aspartate 485. The segment covering glutamate 310–aspartate 324 has biased composition (acidic residues). Residues serine 370–threonine 393 show a composition bias toward low complexity. 2 stretches are compositionally biased toward acidic residues: residues aspartate 406–glycine 417 and serine 450–glycine 468. Residues valine 474–aspartate 485 are compositionally biased toward polar residues.

This sequence belongs to the protein kinase superfamily. STE Ser/Thr protein kinase family. STE20 subfamily. Requires Mg(2+) as cofactor.

The enzyme catalyses L-seryl-[protein] + ATP = O-phospho-L-seryl-[protein] + ADP + H(+). The catalysed reaction is L-threonyl-[protein] + ATP = O-phospho-L-threonyl-[protein] + ADP + H(+). The sequence is that of Serine/threonine-protein kinase dst4 from Dictyostelium discoideum (Social amoeba).